The following is a 254-amino-acid chain: Adenosine 5'-phosphosulfate reductase (254 aa).

[4Fe-4S] cluster is bound by residues Cys-131, Cys-132, Cys-212, and Cys-215. The active-site Nucleophile; cysteine thiosulfonate intermediate is Cys-238.

Belongs to the PAPS reductase family. CysH subfamily. [4Fe-4S] cluster is required as a cofactor.

It is found in the cytoplasm. The enzyme catalyses [thioredoxin]-disulfide + sulfite + AMP + 2 H(+) = adenosine 5'-phosphosulfate + [thioredoxin]-dithiol. It participates in sulfur metabolism; hydrogen sulfide biosynthesis; sulfite from sulfate. In terms of biological role, catalyzes the formation of sulfite from adenosine 5'-phosphosulfate (APS) using thioredoxin as an electron donor. This chain is Adenosine 5'-phosphosulfate reductase, found in Mesorhizobium japonicum (strain LMG 29417 / CECT 9101 / MAFF 303099) (Mesorhizobium loti (strain MAFF 303099)).